Reading from the N-terminus, the 380-residue chain is Cytochrome b (380 aa).

4 helical membrane passes run 34–54 (FGSL…LLAM), 78–99 (WLIR…YLHI), 114–134 (WNTG…GYVL), and 179–199 (FFAL…IHLT). Positions 84 and 98 each coordinate heme b. The heme b site is built by H183 and H197. Position 202 (H202) interacts with a ubiquinone. A run of 4 helical transmembrane segments spans residues 227–247 (LKDI…ALFS), 289–309 (LGGV…PFLH), 321–341 (LSQL…WVGS), and 348–368 (FIII…ILFP).

Belongs to the cytochrome b family. The cytochrome bc1 complex contains 11 subunits: 3 respiratory subunits (MT-CYB, CYC1 and UQCRFS1), 2 core proteins (UQCRC1 and UQCRC2) and 6 low-molecular weight proteins (UQCRH/QCR6, UQCRB/QCR7, UQCRQ/QCR8, UQCR10/QCR9, UQCR11/QCR10 and a cleavage product of UQCRFS1). This cytochrome bc1 complex then forms a dimer. It depends on heme b as a cofactor.

The protein resides in the mitochondrion inner membrane. Component of the ubiquinol-cytochrome c reductase complex (complex III or cytochrome b-c1 complex) that is part of the mitochondrial respiratory chain. The b-c1 complex mediates electron transfer from ubiquinol to cytochrome c. Contributes to the generation of a proton gradient across the mitochondrial membrane that is then used for ATP synthesis. In Thalassoica antarctica (Antarctic petrel), this protein is Cytochrome b (MT-CYB).